Here is a 326-residue protein sequence, read N- to C-terminus: tRNA(Ile)-lysidine synthase (326 aa).

23 to 28 serves as a coordination point for ATP; that stretch reads SGGVDS.

This sequence belongs to the tRNA(Ile)-lysidine synthase family.

The protein resides in the cytoplasm. It catalyses the reaction cytidine(34) in tRNA(Ile2) + L-lysine + ATP = lysidine(34) in tRNA(Ile2) + AMP + diphosphate + H(+). Its function is as follows. Ligates lysine onto the cytidine present at position 34 of the AUA codon-specific tRNA(Ile) that contains the anticodon CAU, in an ATP-dependent manner. Cytidine is converted to lysidine, thus changing the amino acid specificity of the tRNA from methionine to isoleucine. This Wolinella succinogenes (strain ATCC 29543 / DSM 1740 / CCUG 13145 / JCM 31913 / LMG 7466 / NCTC 11488 / FDC 602W) (Vibrio succinogenes) protein is tRNA(Ile)-lysidine synthase.